The following is a 64-amino-acid chain: Prokaryotic ubiquitin-like protein Pup (64 aa).

The interval 1-36 (MAQEQTKRGGGGGDDEDVTGTTAAGQERRKKLAQDT) is disordered. Residues 21–58 (TTAAGQERRKKLAQDTDDLLDEIDDVLEENAEDFVRAY) are ARC ATPase binding. Residues 26-52 (QERRKKLAQDTDDLLDEIDDVLEENAE) adopt a coiled-coil conformation. Glutamine 64 is subject to Deamidated glutamine. Residue glutamine 64 forms an Isoglutamyl lysine isopeptide (Gln-Lys) (interchain with K-? in acceptor proteins) linkage.

Belongs to the prokaryotic ubiquitin-like protein family. As to quaternary structure, strongly interacts with the proteasome-associated ATPase ARC through a hydrophobic interface; the interacting region of Pup lies in its C-terminal half. There is one Pup binding site per ARC hexamer ring. Post-translationally, is modified by deamidation of its C-terminal glutamine to glutamate by the deamidase Dop, a prerequisite to the subsequent pupylation process.

It participates in protein degradation; proteasomal Pup-dependent pathway. Protein modifier that is covalently attached to lysine residues of substrate proteins, thereby targeting them for proteasomal degradation. The tagging system is termed pupylation. In Mycobacterium ulcerans (strain Agy99), this protein is Prokaryotic ubiquitin-like protein Pup.